The following is a 118-amino-acid chain: Protein TusC (118 aa).

It belongs to the DsrF/TusC family. In terms of assembly, heterohexamer, formed by a dimer of trimers. The hexameric TusBCD complex contains 2 copies each of TusB, TusC and TusD. The TusBCD complex interacts with TusE.

The protein localises to the cytoplasm. Functionally, part of a sulfur-relay system required for 2-thiolation of 5-methylaminomethyl-2-thiouridine (mnm(5)s(2)U) at tRNA wobble positions. This chain is Protein TusC, found in Salmonella typhi.